Reading from the N-terminus, the 95-residue chain is RING finger protein Z (95 aa).

G2 is lipidated: N-myristoyl glycine; by host. An RING-type; atypical zinc finger spans residues 38–74 (CKSCWFANKGLLKCSNHYLCLKCLTLMLRRSDYCGIC). Positions 88–91 (PSAP) match the PTAP/PSAP motif motif.

Belongs to the arenaviridae Z protein family. As to quaternary structure, interacts with protein NP; this interaction probably directs the encapsidated genome to budding sites. Interacts (via RING domain) with polymerase L; this interaction inhibits viral transcription and replication, Z partially blocks the product exit tunnel for the releasing nascent RNA product. Interacts with the glycoprotein complex; this interaction plays a role in virion budding. Interacts with host eIF4E; this interaction results in eIF4E reduced affinity for its substrate, the 5'-m7 G cap structure. Interacts (via late-budding domain) with host TSG101; this interaction is essential for budding and release of viral particles. Interacts with host RPLP0; this interaction may serve to load ribosome-like particles inside the virion. Interacts with host PML; this interaction induces PML bodies redistribution in the cytoplasm upon viral infection. Post-translationally, myristoylation is required for the role of RING finger protein Z in assembly and budding.

The protein localises to the virion. Its subcellular location is the host cytoplasm. It localises to the host perinuclear region. The protein resides in the host cell membrane. Functionally, plays a crucial role in virion assembly and budding. Expressed late in the virus life cycle, it acts as an inhibitor of viral transcription and RNA synthesis by interacting with the viral polymerase L. Presumably recruits the NP encapsidated genome to cellular membranes at budding sites via direct interaction with NP. Plays critical roles in the final steps of viral release by interacting with host TSG101, a member of the vacuolar protein-sorting pathway and using other cellular host proteins involved in vesicle formation pathway. The budding of the virus progeny occurs after association of protein Z with the viral glycoprotein complex SSP-GP1-GP2 at the cell periphery, step that requires myristoylation of protein Z. Also selectively represses protein production by associating with host eIF4E. In cell-based minigenome assay, has an inhibitory effect on the ribonucleoprotein machinery (vRNP), which is responsible for the replication and transcription of the viral genome. This is RING finger protein Z from Neotoma (wood rats).